The sequence spans 229 residues: 7-cyano-7-deazaguanine synthase (229 aa).

12-22 (LSGGMDSCVCA) is a binding site for ATP. Positions 194, 202, 205, and 208 each coordinate Zn(2+).

This sequence belongs to the QueC family. Requires Zn(2+) as cofactor.

It catalyses the reaction 7-carboxy-7-deazaguanine + NH4(+) + ATP = 7-cyano-7-deazaguanine + ADP + phosphate + H2O + H(+). It functions in the pathway purine metabolism; 7-cyano-7-deazaguanine biosynthesis. In terms of biological role, catalyzes the ATP-dependent conversion of 7-carboxy-7-deazaguanine (CDG) to 7-cyano-7-deazaguanine (preQ(0)). This Acidobacterium capsulatum (strain ATCC 51196 / DSM 11244 / BCRC 80197 / JCM 7670 / NBRC 15755 / NCIMB 13165 / 161) protein is 7-cyano-7-deazaguanine synthase.